Here is a 354-residue protein sequence, read N- to C-terminus: GRAM domain-containing protein 2A (354 aa).

Residues 1 to 29 are compositionally biased toward polar residues; sequence MTALSRSEATEEGGNQQMHRKTASLNSPV. Positions 1–46 are disordered; the sequence is MTALSRSEATEEGGNQQMHRKTASLNSPVSCKEKPDRVEEPPDYSL. Residues 31–40 show a composition bias toward basic and acidic residues; that stretch reads CKEKPDRVEE. A GRAM domain is found at 72–139; that stretch reads QQYHKLFKDV…VSVQMIKKHK (68 aa). The chain crosses the membrane as a helical span at residues 312–332; that stretch reads LLKVFFVLICFLVMSSSYLAF.

The protein resides in the endoplasmic reticulum membrane. The protein localises to the cell membrane. In terms of biological role, participates in the organization of endoplasmic reticulum-plasma membrane contact sites (EPCS) with pleiotropic functions including STIM1 recruitment and calcium homeostasis. Constitutive tether that co-localize with ESYT2/3 tethers at endoplasmic reticulum-plasma membrane contact sites in a phosphatidylinositol lipid-dependent manner. Pre-marks the subset of phosphtidylinositol 4,5-biphosphate (PI(4,5)P2)-enriched EPCS destined for the store operated calcium entry pathway (SOCE). This is GRAM domain-containing protein 2A from Homo sapiens (Human).